We begin with the raw amino-acid sequence, 381 residues long: 4-hydroxyphenylpyruvate dioxygenase (381 aa).

2 consecutive VOC domains span residues 22-156 and 184-338; these read GMDA…LVDR and AIDH…IFTK. Fe cation-binding residues include His187, His270, and Glu349.

The protein belongs to the 4HPPD family. Homodimer. Fe cation is required as a cofactor.

The enzyme catalyses 3-(4-hydroxyphenyl)pyruvate + O2 = homogentisate + CO2. It participates in amino-acid degradation; L-phenylalanine degradation; acetoacetate and fumarate from L-phenylalanine: step 3/6. The sequence is that of 4-hydroxyphenylpyruvate dioxygenase (hpd) from Streptomyces avermitilis (strain ATCC 31267 / DSM 46492 / JCM 5070 / NBRC 14893 / NCIMB 12804 / NRRL 8165 / MA-4680).